A 67-amino-acid chain; its full sequence is MKLLLLTLTVLLLLSQLTPGGTQRCWNLYGKCRHRCSKKERVYVYCVNNKMCCVKPKYQPKERWWRF.

A signal peptide spans 1–20; that stretch reads MKLLLLTLTVLLLLSQLTPG. Intrachain disulfides connect Cys25-Cys52, Cys32-Cys46, and Cys36-Cys53.

It belongs to the beta-defensin family.

The protein resides in the secreted. In terms of biological role, has antibacterial activity. This is Beta-defensin 123 (DEFB123) from Pongo pygmaeus (Bornean orangutan).